A 354-amino-acid polypeptide reads, in one-letter code: Ion-translocating oxidoreductase complex subunit D (354 aa).

3 consecutive transmembrane segments (helical) span residues 9 to 28, 67 to 87, and 117 to 137; these read IMLH…LYLF, LLSG…WIAV, and VALL…LPLG. At T165 the chain carries FMN phosphoryl threonine. 5 consecutive transmembrane segments (helical) span residues 200–220, 222–242, 249–269, 277–297, and 301–321; these read GSLG…LLAL, IIHW…AALA, VHGG…ALFI, PISR…VFVI, and GNFP…VPLI.

The protein belongs to the NqrB/RnfD family. As to quaternary structure, the complex is composed of six subunits: RnfA, RnfB, RnfC, RnfD, RnfE and RnfG. FMN is required as a cofactor.

It is found in the cell inner membrane. Its function is as follows. Part of a membrane-bound complex that couples electron transfer with translocation of ions across the membrane. In Stutzerimonas stutzeri (Pseudomonas stutzeri), this protein is Ion-translocating oxidoreductase complex subunit D.